The primary structure comprises 401 residues: Dual-specificity RNA methyltransferase RlmN (401 aa).

Glu-114 (proton acceptor) is an active-site residue. One can recognise a Radical SAM core domain in the interval 120-365; that stretch reads DKGRGTLCVS…TMVRRTRGDD (246 aa). A disulfide bridge links Cys-127 with Cys-370. The [4Fe-4S] cluster site is built by Cys-134, Cys-138, and Cys-141. S-adenosyl-L-methionine is bound by residues 187–188, Ser-219, 241–243, and Asn-327; these read GE and SLH. Cys-370 functions as the S-methylcysteine intermediate in the catalytic mechanism.

It belongs to the radical SAM superfamily. RlmN family. [4Fe-4S] cluster is required as a cofactor.

The protein localises to the cytoplasm. The enzyme catalyses adenosine(2503) in 23S rRNA + 2 reduced [2Fe-2S]-[ferredoxin] + 2 S-adenosyl-L-methionine = 2-methyladenosine(2503) in 23S rRNA + 5'-deoxyadenosine + L-methionine + 2 oxidized [2Fe-2S]-[ferredoxin] + S-adenosyl-L-homocysteine. The catalysed reaction is adenosine(37) in tRNA + 2 reduced [2Fe-2S]-[ferredoxin] + 2 S-adenosyl-L-methionine = 2-methyladenosine(37) in tRNA + 5'-deoxyadenosine + L-methionine + 2 oxidized [2Fe-2S]-[ferredoxin] + S-adenosyl-L-homocysteine. Functionally, specifically methylates position 2 of adenine 2503 in 23S rRNA and position 2 of adenine 37 in tRNAs. m2A2503 modification seems to play a crucial role in the proofreading step occurring at the peptidyl transferase center and thus would serve to optimize ribosomal fidelity. In Xanthomonas axonopodis pv. citri (strain 306), this protein is Dual-specificity RNA methyltransferase RlmN.